Reading from the N-terminus, the 422-residue chain is MDLINELHQRNLIFHITNENKLKELIKNKYISLYCGFDPTEDSLHVGHLLPLITLKRFQVLGHKPIVLIGGATSLIGDPSFKTKERLLKSDSFVEKCTLKISQQISFFLDFNSNFNSAIILNNNLWFKKINILQFLRDVGKYFSVNALINREAVKKRIKRSDQGISFTEFSYNLLQAYDFFILNQKNQVSLQIGGSDQWGNISSGMHLIHRISKKEAYGLTLPLLMQSNGIKFGKTESGTVWLDPQKTTPYRFYQFWMNIEDSNVYRFLKLFTFIDIHEINEREKNSYKKNQIVSDKVLLAKHMTRLVHGDEKLSAAERITNILFFKNINDIQISDLEQLRKDGVPVVETYKIKDLQEALVLSSLAQSRTQAKNMIISNSISINTKKIVNKNYIIDDNDKLFNQFTLLSRGKKNHCLIYWNK.

Position 34 (tyrosine 34) interacts with L-tyrosine. The short motif at 39–48 is the 'HIGH' region element; it reads PTEDSLHVGH. L-tyrosine contacts are provided by tyrosine 172 and glutamine 176. Residues 232-236 carry the 'KMSKS' region motif; the sequence is KFGKT. Residue lysine 235 participates in ATP binding. In terms of domain architecture, S4 RNA-binding spans 354-412; that stretch reads KDLQEALVLSSLAQSRTQAKNMIISNSISINTKKIVNKNYIIDDNDKLFNQFTLLSRGK.

This sequence belongs to the class-I aminoacyl-tRNA synthetase family. TyrS type 1 subfamily. In terms of assembly, homodimer.

It localises to the cytoplasm. It carries out the reaction tRNA(Tyr) + L-tyrosine + ATP = L-tyrosyl-tRNA(Tyr) + AMP + diphosphate + H(+). Catalyzes the attachment of tyrosine to tRNA(Tyr) in a two-step reaction: tyrosine is first activated by ATP to form Tyr-AMP and then transferred to the acceptor end of tRNA(Tyr). In Buchnera aphidicola subsp. Schizaphis graminum (strain Sg), this protein is Tyrosine--tRNA ligase.